The chain runs to 314 residues: Testis-specific Y-encoded protein 9 (314 aa).

The protein belongs to the nucleosome assembly protein (NAP) family.

It localises to the cytoplasm. Its subcellular location is the nucleus. Its function is as follows. May be involved in sperm differentiation and proliferation. This Homo sapiens (Human) protein is Testis-specific Y-encoded protein 9.